A 351-amino-acid polypeptide reads, in one-letter code: MGSSVEQNILVTGGAGFIGTHTVVQLLNQGFKVTIIDNLDNSVVEAVHRVRELVGPDLSTKLEFNLGDLRNKGDIEKLFSNQRFDAVIHFAGLKAVGESVGNPRRYFDNNLVGTINLYETMAKYNCKMMVFSSSATVYGQPEIVPCVEDFELQAMNPYGRTKLFLEEIARDIHAAEPEWKIILLRYFNPVGAHESGRIGEDPKGIPNNLMPYIQQVAVGRLPELNVFGHDYPTMDGSAVRDYIHVMDLADGHVAALNKLFSDSKIGCTAYNLGTGQGTSVLEMVSSFEKASGKKIPIKLCPRRAGDATAVYASTQKAEKELGWKAKYGVDEMCRDQWNWANKNPWGFQKKP.

Residue 8–39 participates in NAD(+) binding; the sequence is NILVTGGAGFIGTHTVVQLLNQGFKVTIIDNL. Ser134 contributes to the substrate binding site. The Proton acceptor role is filled by Tyr158.

This sequence belongs to the NAD(P)-dependent epimerase/dehydratase family. In terms of assembly, homodimer. Heterodimer. NAD(+) serves as cofactor. In terms of tissue distribution, ubiquitous.

The catalysed reaction is UDP-alpha-D-glucose = UDP-alpha-D-galactose. It catalyses the reaction UDP-beta-L-arabinopyranose = UDP-alpha-D-xylose. It participates in carbohydrate metabolism; galactose metabolism. It functions in the pathway nucleotide-sugar biosynthesis; UDP-L-arabinose biosynthesis; UDP-L-arabinose from UDP-alpha-D-xylose: step 1/1. The protein operates within cell wall biogenesis; cell wall polysaccharide biosynthesis. Strongly inhibited by UDP. Its function is as follows. Catalyzes the interconversion between UDP-glucose and UDP-galactose and the interconversion between UDP-arabinose and UDP-xylose. Cooperates with UGE2 in pollen development. May preferentially act in the UDP-galactose to UDP-glucose direction, therefore displaying a role in carbohydrate catabolism. The sequence is that of Bifunctional UDP-glucose 4-epimerase and UDP-xylose 4-epimerase 3 (UGE3) from Arabidopsis thaliana (Mouse-ear cress).